A 293-amino-acid chain; its full sequence is MPSLKDLKNRIASVKATQKITKAMKMVAAAKLRRAQEAAEAARPYSQRMGAVLANIAQAVGSDDGVSTLMTGTGKDDVHLLVVCTAERGLCGGFNSQISRFARDHVRSLLAAGKTVKIYCVGKKGYDSLRREFGALIVERTEFREVKRVAFENADTVARKVISMFDKGEFDVCTLFYSEFKSVISQIPTARQLIPAAVGDAPAASSSAAAIYDYEPDAASILSDLIPRNIAVQIFRALLENAAGEMGAKMSAMDNATRNAGEMINKLTLSYNRQRQAKITTELIEIIAGAEAL.

It belongs to the ATPase gamma chain family. As to quaternary structure, F-type ATPases have 2 components, CF(1) - the catalytic core - and CF(0) - the membrane proton channel. CF(1) has five subunits: alpha(3), beta(3), gamma(1), delta(1), epsilon(1). CF(0) has three main subunits: a, b and c.

Its subcellular location is the cell inner membrane. Functionally, produces ATP from ADP in the presence of a proton gradient across the membrane. The gamma chain is believed to be important in regulating ATPase activity and the flow of protons through the CF(0) complex. This Allorhizobium ampelinum (strain ATCC BAA-846 / DSM 112012 / S4) (Agrobacterium vitis (strain S4)) protein is ATP synthase gamma chain.